Consider the following 242-residue polypeptide: C-reactive protein 1.1 (242 aa).

The first 24 residues, 1-24, serve as a signal peptide directing secretion; it reads MKTFHGPTCGTAVSLCLLLFLTSA. In terms of domain architecture, Pentraxin (PTX) spans 30 to 241; sequence ITSKVKFPPS…GVVLSPNEIC (212 aa). Phosphocholine contacts are provided by Thr60 and Tyr63. Disulfide bonds link Cys62–Cys125 and Cys112–Cys144. Residues Asp85 and Asn86 each coordinate Ca(2+). Residue Asn147 is glycosylated (N-linked (GlcNAc...) asparagine). Residues Gln169, Asp170, and Gln180 each coordinate Ca(2+). Cys207 and Cys241 form a disulfide bridge.

This sequence belongs to the pentraxin family. In terms of assembly, homopentamer. Pentraxin (or pentaxin) have a discoid arrangement of 5 non-covalently bound subunits. Requires Ca(2+) as cofactor.

The protein localises to the secreted. Functionally, might serve the role of immunoglobulins. In Limulus polyphemus (Atlantic horseshoe crab), this protein is C-reactive protein 1.1.